The sequence spans 576 residues: Insulin-like growth factor 2 mRNA-binding protein 1 (576 aa).

RRM domains are found at residues N2–P75 and R81–D156. Residues Q158–V189 form a disordered region. 2 consecutive KH domains span residues D195–I260 and E276–I343. At Y396 the chain carries Phosphotyrosine; by SRC. KH domains are found at residues Q404–I469 and K486–I552.

The protein belongs to the RRM IMP/VICKZ family. As to quaternary structure, can form homooligomers and heterooligomers with IGF2BP1 and IGF2BP3 in an RNA-dependent manner. Associates with the cytoskeleton, predominantly with actin filament bundles and occasionally with microtubules. In a heterologous system, interacts with ELAVL1, DHX9 and HNRNPU. Phosphorylated by SRC at Tyr-396. This residue is involved in ACTB mRNA binding, its phosphorylation impairs association with ACTB mRNA and hence abolishes translational repression. Phosphorylation occurs in close proximity to filopodia and in the growth cones of differentiated neuroglioblastoma cells. As to expression, expressed in neurons and embryonic fibroblasts (at protein level).

It localises to the nucleus. It is found in the cytoplasm. The protein localises to the perinuclear region. The protein resides in the P-body. Its subcellular location is the stress granule. It localises to the cell projection. It is found in the growth cone. The protein localises to the filopodium. The protein resides in the lamellipodium. Functionally, RNA-binding factor that recruits target transcripts to cytoplasmic protein-RNA complexes (mRNPs). This transcript 'caging' into mRNPs allows mRNA transport and transient storage. It also modulates the rate and location at which target transcripts encounter the translational apparatus and shields them from endonuclease attacks or microRNA-mediated degradation. Preferentially binds to N6-methyladenosine (m6A)-containing mRNAs and increases their stability. Plays a direct role in the transport and translation of transcripts required for axonal regeneration in adult sensory neurons. Regulates localized beta-actin/ACTB mRNA translation in polarized cells, a crucial process for cell migration and neurite outgrowth. Co-transcriptionally associates with the ACTB mRNA in the nucleus. This binding involves by a conserved 54-nucleotide element in the ACTB mRNA 3'-UTR, known as the 'zipcode'. The ribonucleoparticle (RNP) thus formed is exported to the cytoplasm, binds to a motor protein and is transported along the cytoskeleton to the cell periphery. During transport, IGF2BP1 prevents beta-actin mRNA from being translated into protein. When the RNP complex reaches its destination near the plasma membrane, IGF2BP1 is phosphorylated by SRC. This releases the mRNA, allowing ribosomal 40S and 60S subunits to assemble and initiate ACTB protein synthesis. The monomeric ACTB protein then assembles into the subcortical actin cytoskeleton, which pushes the leading edge onwards. Binds MYC mRNA. Binding to MYC mRNA is enhanced by m6A-modification of the CRD. Promotes the directed movement of cells by fine-tuning intracellular signaling networks. Binds to MAPK4 3'-UTR and inhibits its translation. Interacts with PTEN transcript open reading frame (ORF) and prevents mRNA decay. This combined action on MAPK4 (down-regulation) and PTEN (up-regulation) antagonizes HSPB1 phosphorylation, consequently it prevents G-actin sequestration by phosphorylated HSPB1, allowing F-actin polymerization. Hence enhances the velocity of cell migration and stimulates directed cell migration by PTEN-modulated polarization. The sequence is that of Insulin-like growth factor 2 mRNA-binding protein 1 (IGF2BP1) from Gallus gallus (Chicken).